A 371-amino-acid polypeptide reads, in one-letter code: Glyco-Gag protein (371 aa).

The Cytoplasmic segment spans residues 1–51; the sequence is MSGASSGTAIGAHLFGVSPEYRVLIGDEGAGPSKSLSEVSFSVWYRSRAAR. The chain crosses the membrane as a helical span at residues 52–72; sequence LVILCLVASFLVPCLTFLIAE. Over 73-371 the chain is Extracellular; it reads AVMGQTVTTP…NVIDETFPLT (299 aa). A glycan (N-linked (GlcNAc...) asparagine; by host) is linked at N134. Disordered stretches follow at residues 171-281 and 350-371; these read VRPF…NNRP and VPGE…FPLT. Positions 174–193 are enriched in pro residues; that stretch reads FLPPPKPPTPLPQPLSPQPS. A compositionally biased stretch (low complexity) spans 194 to 203; that stretch reads APLTSSLYPV. 2 stretches are compositionally biased toward pro residues: residues 204–220 and 230–245; these read VPKP…PDPS and EPPP…PSGP.

Post-translationally, glycosylated by host. Cleaved by host near the middle of the molecule, releasing the c-terminal half containing capsid and nucleoprotein domains op GAG.

It localises to the host cell membrane. In terms of biological role, plays a role in viral particle release. Presumably acts by facilitating the fission of the virion bud at the cell surface. In Feline sarcoma virus (strain Snyder-Theilen), this protein is Glyco-Gag protein.